The chain runs to 429 residues: MAVIEAIGAREILDSRGNPTVEVEVLLDDGTVGRAAVPSGASTGAFEAVEKRDGDDRYGGKGVRQAVQAVTDQIAPEIIGFDATEQRVLDARLIELDGTPNKSRLGANAILGVSMAVARAAADSADLPLFRYLGGPNAHLLPVPMMNILNGGAHADSNVDIQEFLIAPIGAATFAEALRYGVETYHALKAVLKGRGLATGLGDEGGFAPNLAHNREALDLILEAIGKAGFRPGRDIAVAIDAAATEFYRDGRYILEGQPRTAAELIRYYEELVASYPLVSLEDPLAEEDWDGWRELTAALGGTVQLVGDDIFVTNPERISRGIQTSVANAVLIKLNQIGTVTETLDAVELAHRAGYRTMISHRSGETEDTTIADVAVATNAGQIKTGAPARSERVAKYNQLLRIEEELDDAARYAGVAAFPRFAGGSAG.

(2R)-2-phosphoglycerate is bound at residue Gln162. Glu204 serves as the catalytic Proton donor. Residues Asp241, Glu282, and Asp309 each coordinate Mg(2+). Positions 334, 363, 364, and 385 each coordinate (2R)-2-phosphoglycerate. The active-site Proton acceptor is the Lys334.

The protein belongs to the enolase family. Mg(2+) is required as a cofactor.

Its subcellular location is the cytoplasm. The protein resides in the secreted. It is found in the cell surface. It carries out the reaction (2R)-2-phosphoglycerate = phosphoenolpyruvate + H2O. It participates in carbohydrate degradation; glycolysis; pyruvate from D-glyceraldehyde 3-phosphate: step 4/5. Functionally, catalyzes the reversible conversion of 2-phosphoglycerate (2-PG) into phosphoenolpyruvate (PEP). It is essential for the degradation of carbohydrates via glycolysis. This is Enolase from Acidothermus cellulolyticus (strain ATCC 43068 / DSM 8971 / 11B).